The primary structure comprises 517 residues: V-type proton ATPase subunit B (517 aa).

Serine 4 carries the post-translational modification Phosphoserine. Residue lysine 14 forms a Glycyl lysine isopeptide (Lys-Gly) (interchain with G-Cter in ubiquitin) linkage. A Phosphoserine modification is found at serine 137. Arginine 381 contributes to the ATP binding site. The disordered stretch occupies residues 487–517 (RARDDADEDEEDPDTRSSGKKKDASQEESLI). Positions 500 to 511 (DTRSSGKKKDAS) are enriched in basic and acidic residues. A phosphoserine mark is found at serine 503 and serine 504. A Glycyl lysine isopeptide (Lys-Gly) (interchain with G-Cter in ubiquitin) cross-link involves residue lysine 508. Position 511 is a phosphoserine; by ATM or ATR (serine 511). Position 515 is a phosphoserine (serine 515).

The protein belongs to the ATPase alpha/beta chains family. In terms of assembly, V-ATPase is a heteromultimeric enzyme composed of a peripheral catalytic V1 complex (components A to H) attached to an integral membrane V0 proton pore complex (components: a, c, c', c'', d, e, f and VOA1). Interacts with RAV1 and RAV2 components of the RAVE complex, which are essential for the stability and assembly of V-ATPase.

The protein localises to the vacuole membrane. Functionally, non-catalytic subunit of the V1 complex of vacuolar(H+)-ATPase (V-ATPase), a multisubunit enzyme composed of a peripheral complex (V1) that hydrolyzes ATP and a membrane integral complex (V0) that translocates protons. V-ATPase is responsible for acidifying and maintaining the pH of intracellular compartments. This Saccharomyces cerevisiae (strain ATCC 204508 / S288c) (Baker's yeast) protein is V-type proton ATPase subunit B (VMA2).